A 172-amino-acid polypeptide reads, in one-letter code: Translationally-controlled tumor protein homolog (172 aa).

In terms of domain architecture, TCTP spans 1–172 (MIIYRDCISQ…FKDGLEMEKC (172 aa)).

Belongs to the TCTP family. As to expression, expressed by the venom gland.

It is found in the secreted. In terms of biological role, venom protein that causes edema, enhances vascular permeability and is likely related to the inflammatory activity of the venom. The sequence is that of Translationally-controlled tumor protein homolog from Crotalus adamanteus (Eastern diamondback rattlesnake).